Here is a 283-residue protein sequence, read N- to C-terminus: Protease HtpX (283 aa).

2 helical membrane passes run 4–24 (ILLFLATNMAVMLVLGIILSV) and 33–53 (GGILIMALLFGFAGSLISLFL). His-139 lines the Zn(2+) pocket. The active site involves Glu-140. His-143 contributes to the Zn(2+) binding site. Transmembrane regions (helical) follow at residues 147 to 167 (GDMVTMALLQGVLNTFVIFLS) and 190 to 210 (IYFLVSMVLEMLFGVLASIIA). Glu-218 lines the Zn(2+) pocket.

This sequence belongs to the peptidase M48B family. Zn(2+) is required as a cofactor.

The protein resides in the cell inner membrane. The protein is Protease HtpX of Haemophilus influenzae (strain PittEE).